The sequence spans 206 residues: Holliday junction branch migration complex subunit RuvA (206 aa).

A domain I region spans residues 1–63; it reads MIASLRGTVI…EDAMKLYGFI (63 aa). Residues 64 to 142 form a domain II region; sequence DNESREMFSV…AFAAGVVDEA (79 aa). Residues 143–153 form a flexible linker region; sequence GEQISLPNANI. The interval 154 to 206 is domain III; sequence ASEVVVEQVSQALVGLGFSEKQSDDAVSFVLAADPSLDTSGALRAALAKLSGK.

Belongs to the RuvA family. In terms of assembly, homotetramer. Forms an RuvA(8)-RuvB(12)-Holliday junction (HJ) complex. HJ DNA is sandwiched between 2 RuvA tetramers; dsDNA enters through RuvA and exits via RuvB. An RuvB hexamer assembles on each DNA strand where it exits the tetramer. Each RuvB hexamer is contacted by two RuvA subunits (via domain III) on 2 adjacent RuvB subunits; this complex drives branch migration. In the full resolvosome a probable DNA-RuvA(4)-RuvB(12)-RuvC(2) complex forms which resolves the HJ.

It is found in the cytoplasm. In terms of biological role, the RuvA-RuvB-RuvC complex processes Holliday junction (HJ) DNA during genetic recombination and DNA repair, while the RuvA-RuvB complex plays an important role in the rescue of blocked DNA replication forks via replication fork reversal (RFR). RuvA specifically binds to HJ cruciform DNA, conferring on it an open structure. The RuvB hexamer acts as an ATP-dependent pump, pulling dsDNA into and through the RuvAB complex. HJ branch migration allows RuvC to scan DNA until it finds its consensus sequence, where it cleaves and resolves the cruciform DNA. The polypeptide is Holliday junction branch migration complex subunit RuvA (Corynebacterium glutamicum (strain R)).